Reading from the N-terminus, the 272-residue chain is Eukaryotic translation initiation factor 4E homolog (272 aa).

The disordered stretch occupies residues 249–272 (GKLNSGRKPSNTRGGFSSFGNKRY). The span at 255-272 (RKPSNTRGGFSSFGNKRY) shows a compositional bias: polar residues.

This sequence belongs to the eukaryotic initiation factor 4E family.

Functionally, recognizes and binds the 7-methylguanosine-containing mRNA cap during an early step in the initiation of protein synthesis and facilitates ribosome binding by inducing the unwinding of the mRNAs secondary structures. In Acanthamoeba polyphaga mimivirus (APMV), this protein is Eukaryotic translation initiation factor 4E homolog.